Here is a 212-residue protein sequence, read N- to C-terminus: Acyl-homoserine-lactone synthase (212 aa).

The protein belongs to the autoinducer synthase family.

It catalyses the reaction a fatty acyl-[ACP] + S-adenosyl-L-methionine = an N-acyl-L-homoserine lactone + S-methyl-5'-thioadenosine + holo-[ACP] + H(+). Its function is as follows. Required for the synthesis of autoinducer molecules which bind to RaiR and that are involved in the restriction of nodule number. The protein is Acyl-homoserine-lactone synthase (raiI) of Rhizobium etli.